Reading from the N-terminus, the 255-residue chain is Small ribosomal subunit protein eS1 (255 aa).

Residues M1 to K18 show a composition bias toward basic residues. The segment at M1–D28 is disordered. A2 carries the post-translational modification N-acetylalanine; partial. Basic and acidic residues predominate over residues R19–D28.

This sequence belongs to the eukaryotic ribosomal protein eS1 family. Component of the small ribosomal subunit. Mature ribosomes consist of a small (40S) and a large (60S) subunit. The 40S subunit contains about 33 different proteins and 1 molecule of RNA (18S). The 60S subunit contains about 49 different proteins and 3 molecules of RNA (25S, 5.8S and 5S).

Its subcellular location is the cytoplasm. This chain is Small ribosomal subunit protein eS1, found in Ajellomyces capsulatus (strain NAm1 / WU24) (Darling's disease fungus).